The following is a 664-amino-acid chain: UvrABC system protein B (664 aa).

Residues 25–182 enclose the Helicase ATP-binding domain; sequence KSFGEGKNKI…RKFLHIQYAR (158 aa). 38-45 provides a ligand contact to ATP; it reads GVTGSGKT. The Beta-hairpin motif lies at 91–114; it reads YYDYYQPEAYVPSSDTFIEKDMSM. Residues 429 to 595 form the Helicase C-terminal domain; that stretch reads QIEDLLNEIR…TIQKEIHDIL (167 aa). The 36-residue stretch at 625 to 660 folds into the UVR domain; the sequence is DKLREALKREMLRYANDMDFEKAAMFRDKMLALGPD.

This sequence belongs to the UvrB family. As to quaternary structure, forms a heterotetramer with UvrA during the search for lesions. Interacts with UvrC in an incision complex.

Its subcellular location is the cytoplasm. Its function is as follows. The UvrABC repair system catalyzes the recognition and processing of DNA lesions. A damage recognition complex composed of 2 UvrA and 2 UvrB subunits scans DNA for abnormalities. Upon binding of the UvrA(2)B(2) complex to a putative damaged site, the DNA wraps around one UvrB monomer. DNA wrap is dependent on ATP binding by UvrB and probably causes local melting of the DNA helix, facilitating insertion of UvrB beta-hairpin between the DNA strands. Then UvrB probes one DNA strand for the presence of a lesion. If a lesion is found the UvrA subunits dissociate and the UvrB-DNA preincision complex is formed. This complex is subsequently bound by UvrC and the second UvrB is released. If no lesion is found, the DNA wraps around the other UvrB subunit that will check the other stand for damage. The protein is UvrABC system protein B of Leptospira biflexa serovar Patoc (strain Patoc 1 / Ames).